The chain runs to 513 residues: ATP synthase subunit alpha (513 aa).

169–176 serves as a coordination point for ATP; it reads GDRQTGKT.

This sequence belongs to the ATPase alpha/beta chains family. F-type ATPases have 2 components, CF(1) - the catalytic core - and CF(0) - the membrane proton channel. CF(1) has five subunits: alpha(3), beta(3), gamma(1), delta(1), epsilon(1). CF(0) has three main subunits: a(1), b(2) and c(9-12). The alpha and beta chains form an alternating ring which encloses part of the gamma chain. CF(1) is attached to CF(0) by a central stalk formed by the gamma and epsilon chains, while a peripheral stalk is formed by the delta and b chains.

Its subcellular location is the cell inner membrane. The catalysed reaction is ATP + H2O + 4 H(+)(in) = ADP + phosphate + 5 H(+)(out). Functionally, produces ATP from ADP in the presence of a proton gradient across the membrane. The alpha chain is a regulatory subunit. The protein is ATP synthase subunit alpha of Ruthia magnifica subsp. Calyptogena magnifica.